The sequence spans 655 residues: p-hydroxybenzoic acid efflux pump subunit AaeB (655 aa).

A run of 11 helical transmembrane segments spans residues 13–33 (FAVKLATAIVLALFVGFHFQL), 38–58 (WAVLTAAIVAAGPAFAAGGEP), 69–89 (LRIIGTFIGCIAGLVIIIAMI), 93–113 (LLMILVCCIWAGFCTWISSLV), 121–141 (WGLAGYTALIIVITIQPEPLL), 152–172 (EIVIGIVCAIMADLLFSPRSI), 370–390 (LFWLWTGWTSGSGAMVMIAVV), 407–427 (FIYGTLAALPLGLLYFLVIIP), 431–451 (QSMLLLCISLAVLGFFLGIEV), 459–479 (MGALASTINIIVLDNPMTFHF), and 482–502 (FLDSALGQIVGCVLAFTVILL).

This sequence belongs to the aromatic acid exporter ArAE (TC 2.A.85) family.

Its subcellular location is the cell inner membrane. Its function is as follows. Forms an efflux pump with AaeA. Could function as a metabolic relief valve, allowing to eliminate certain compounds when they accumulate to high levels in the cell. This is p-hydroxybenzoic acid efflux pump subunit AaeB from Escherichia coli O7:K1 (strain IAI39 / ExPEC).